The primary structure comprises 166 residues: Mitochondrial fission process protein 1 (166 aa).

2 consecutive transmembrane segments (helical) span residues 34 to 54 (SLVPAAVVWLSYGVASSYVLA) and 80 to 100 (AVVDTFVWQALASVAIPGFTI). Lys-123 is modified (N6-succinyllysine). The helical transmembrane segment at 129 to 149 (LGLLTIPIIIHPIDRSVDFLL) threads the bilayer.

The protein belongs to the MTFP1 family.

The protein resides in the mitochondrion inner membrane. Involved in the mitochondrial division probably by regulating membrane fission. Loss-of-function induces the release of cytochrome c, which activates the caspase cascade and leads to apoptosis. This chain is Mitochondrial fission process protein 1 (MTFP1), found in Homo sapiens (Human).